The sequence spans 813 residues: Glycerol-3-phosphate acyltransferase (813 aa).

The short motif at 304-309 (CHRSHI) is the HXXXXD motif element.

It belongs to the GPAT/DAPAT family.

It is found in the cell inner membrane. It carries out the reaction sn-glycerol 3-phosphate + an acyl-CoA = a 1-acyl-sn-glycero-3-phosphate + CoA. It functions in the pathway phospholipid metabolism; CDP-diacylglycerol biosynthesis; CDP-diacylglycerol from sn-glycerol 3-phosphate: step 1/3. The sequence is that of Glycerol-3-phosphate acyltransferase from Actinobacillus succinogenes (strain ATCC 55618 / DSM 22257 / CCUG 43843 / 130Z).